Consider the following 294-residue polypeptide: Nucleotide-binding protein Maqu_2718 (294 aa).

Position 8–15 (8–15 (GRSGSGKS)) interacts with ATP. A GTP-binding site is contributed by 61–64 (DARN).

This sequence belongs to the RapZ-like family.

Functionally, displays ATPase and GTPase activities. This Marinobacter nauticus (strain ATCC 700491 / DSM 11845 / VT8) (Marinobacter aquaeolei) protein is Nucleotide-binding protein Maqu_2718.